Here is a 148-residue protein sequence, read N- to C-terminus: uncharacterized protein (148 aa).

The next 2 membrane-spanning stretches (helical) occupy residues 16-36 (IVGAVIFSMSIIVILYISIIL) and 41-61 (LSFSIILAVDILIIALFAYIF).

To M.jannaschii MJ0696.

The protein localises to the cell membrane. This is an uncharacterized protein from Methanocaldococcus jannaschii (strain ATCC 43067 / DSM 2661 / JAL-1 / JCM 10045 / NBRC 100440) (Methanococcus jannaschii).